Reading from the N-terminus, the 387-residue chain is Probable G-protein coupled receptor 173 (387 aa).

Topologically, residues 1–40 (MANGNASSDGPGNPLAAVVSTTGGVMGGAPSSAVSTYVKL) are extracellular. The N-linked (GlcNAc...) asparagine glycan is linked to N5. The helical transmembrane segment at 41-61 (VLLGLIICISLVGNLVVSLLV) threads the bilayer. The Cytoplasmic portion of the chain corresponds to 62 to 87 (LRDRALHKAPYYFLLDLCLADTIRSA). Residues 88–108 (VCFPFVLVSIKNGSAWTYSVL) form a helical membrane-spanning segment. At 109–111 (SCK) the chain is on the extracellular side. C110 and C188 form a disulfide bridge. The chain crosses the membrane as a helical span at residues 112 to 132 (VVAFMAVLFCFHAAFMLFCIS). At 133 to 153 (VTRYMAIAHHRFYSKRMTFWT) the chain is on the cytoplasmic side. The chain crosses the membrane as a helical span at residues 154–174 (CVAVVCMVWTLSVAMAFPPVF). Over 175–202 (DVGTYKFIREEDQCIFEHRYFKANDTLG) the chain is Extracellular. N198 carries N-linked (GlcNAc...) asparagine glycosylation. A helical transmembrane segment spans residues 203–223 (FMLMLAVLILATHVVYMKLLL). The Cytoplasmic segment spans residues 224–301 (FEYKHRKMKP…FKAEKQLGRM (78 aa)). The helical transmembrane segment at 302-322 (FYVITLFFLVLWSPYIVACYW) threads the bilayer. The Extracellular segment spans residues 323–335 (RVFVKACTIPHRY). A helical transmembrane segment spans residues 336–356 (LSTTVWMSFAQAGVNPIICFF). Topologically, residues 357–387 (LNKDLKKGLLAHLPPCCRTPPQLPREPYCVM) are cytoplasmic.

It belongs to the G-protein coupled receptor 1 family.

It localises to the cell membrane. Functionally, is a receptor for the SMIM20 derived peptides Phoenixin-14 and Phoenixin-20. It mediates the Phoenixin-14 and Phoenixin-20 augmentation of gonadotropin-releasing hormone (GNRH) signaling in the hypothalamus and pituitary gland. In the ovary, it mediates the effects of Phoenixin-14 and Phoenixin-20 induced granulosa cell proliferation during follicular growth. The protein is Probable G-protein coupled receptor 173 (gpr173) of Danio rerio (Zebrafish).